The sequence spans 119 residues: Large ribosomal subunit protein uL22 (119 aa).

The protein belongs to the universal ribosomal protein uL22 family. In terms of assembly, part of the 50S ribosomal subunit.

Its function is as follows. This protein binds specifically to 23S rRNA; its binding is stimulated by other ribosomal proteins, e.g. L4, L17, and L20. It is important during the early stages of 50S assembly. It makes multiple contacts with different domains of the 23S rRNA in the assembled 50S subunit and ribosome. The globular domain of the protein is located near the polypeptide exit tunnel on the outside of the subunit, while an extended beta-hairpin is found that lines the wall of the exit tunnel in the center of the 70S ribosome. The polypeptide is Large ribosomal subunit protein uL22 (Rickettsia conorii (strain ATCC VR-613 / Malish 7)).